Reading from the N-terminus, the 394-residue chain is MARDYYEILGVSRDSSKEEIKRAYRRLARKYHPDVNKEPGAEDRFKEINRAYEVLSDDELRARYDRFGEAGLSGAAAAASGFQDFAGIGGFADLFESFFTNFAGGGVGYSRSRQGPVRGDDLRFDLKLEFLEAIFGGEKQIRISHLEVCPVCGGSGAKPGTDVKVCPTCGGAGQVRRATRTPFGNFTQVSICPTCGGAGRVLEEPCYNCNGEGLAQTTKKLRINIPAGVDSGTRLRVSGEGDAGRRGGPPGDLYVYLFVEPDPDFQRDGLTIFSQVRVSYLQAILGAKVLVPTVDSKAGLEEEAELTIPAGSQPGTVLTLEGKGVPRLGNPMLRGDHKITLVVEIPTRISSEERELLMRLAELHGERINKRDGFLGGLLRGLAQMPGNREREEE.

A J domain is found at 4 to 68 (DYYEILGVSR…ELRARYDRFG (65 aa)). The CR-type zinc finger occupies 136 to 218 (GGEKQIRISH…CNGEGLAQTT (83 aa)). Residues Cys-149, Cys-152, Cys-166, Cys-169, Cys-192, Cys-195, Cys-206, and Cys-209 each coordinate Zn(2+). CXXCXGXG motif repeat units follow at residues 149-156 (CPVCGGSG), 166-173 (CPTCGGAG), 192-199 (CPTCGGAG), and 206-213 (CYNCNGEG).

It belongs to the DnaJ family. As to quaternary structure, homodimer. It depends on Zn(2+) as a cofactor.

The protein localises to the cytoplasm. Participates actively in the response to hyperosmotic and heat shock by preventing the aggregation of stress-denatured proteins and by disaggregating proteins, also in an autonomous, DnaK-independent fashion. Unfolded proteins bind initially to DnaJ; upon interaction with the DnaJ-bound protein, DnaK hydrolyzes its bound ATP, resulting in the formation of a stable complex. GrpE releases ADP from DnaK; ATP binding to DnaK triggers the release of the substrate protein, thus completing the reaction cycle. Several rounds of ATP-dependent interactions between DnaJ, DnaK and GrpE are required for fully efficient folding. Also involved, together with DnaK and GrpE, in the DNA replication of plasmids through activation of initiation proteins. In Synechococcus sp. (strain JA-3-3Ab) (Cyanobacteria bacterium Yellowstone A-Prime), this protein is Chaperone protein DnaJ.